A 288-amino-acid chain; its full sequence is 4-diphosphocytidyl-2-C-methyl-D-erythritol kinase (288 aa).

Lysine 12 is a catalytic residue. 95–105 (PAGGGVGGGSS) contacts ATP. Aspartate 137 is an active-site residue.

It belongs to the GHMP kinase family. IspE subfamily.

The enzyme catalyses 4-CDP-2-C-methyl-D-erythritol + ATP = 4-CDP-2-C-methyl-D-erythritol 2-phosphate + ADP + H(+). It functions in the pathway isoprenoid biosynthesis; isopentenyl diphosphate biosynthesis via DXP pathway; isopentenyl diphosphate from 1-deoxy-D-xylulose 5-phosphate: step 3/6. Its function is as follows. Catalyzes the phosphorylation of the position 2 hydroxy group of 4-diphosphocytidyl-2C-methyl-D-erythritol. This is 4-diphosphocytidyl-2-C-methyl-D-erythritol kinase from Halorhodospira halophila (strain DSM 244 / SL1) (Ectothiorhodospira halophila (strain DSM 244 / SL1)).